The sequence spans 356 residues: Histidinol-phosphate aminotransferase (356 aa).

At Lys214 the chain carries N6-(pyridoxal phosphate)lysine.

It belongs to the class-II pyridoxal-phosphate-dependent aminotransferase family. Histidinol-phosphate aminotransferase subfamily. In terms of assembly, homodimer. The cofactor is pyridoxal 5'-phosphate.

It catalyses the reaction L-histidinol phosphate + 2-oxoglutarate = 3-(imidazol-4-yl)-2-oxopropyl phosphate + L-glutamate. The protein operates within amino-acid biosynthesis; L-histidine biosynthesis; L-histidine from 5-phospho-alpha-D-ribose 1-diphosphate: step 7/9. This Escherichia coli O157:H7 protein is Histidinol-phosphate aminotransferase (hisC).